A 747-amino-acid polypeptide reads, in one-letter code: Probable cyclic nucleotide-gated ion channel 6 (747 aa).

The Cytoplasmic segment spans residues 1-117 (MFDTCGPKGV…DKFLLLCNKL (117 aa)). A helical transmembrane segment spans residues 118–138 (FVASCILAVSVDPLFLYLPFI). The Extracellular segment spans residues 139 to 150 (NDKAKCVGIDRK). The helical transmembrane segment at 151–171 (LAIIVTTIRTVIDSFYLFHMA) threads the bilayer. Topologically, residues 172-205 (LRFRTAYVAPSSRVFGRGELVIDPAQIAKRYLQQ) are cytoplasmic. A helical transmembrane segment spans residues 206–226 (YFIIDLLSVLPVPQIIVWRFL). Topologically, residues 227–239 (YTSRGANVLATKQ) are extracellular. Residues 240-260 (ALRYIVLVQYIPRFLRMYPLS) form a helical membrane-spanning segment. The Cytoplasmic segment spans residues 261–280 (SELKRTAGVFAETAWAGAAY). A helical transmembrane segment spans residues 281–301 (YLLLYMLASHIVGALWYLLAL). The Extracellular portion of the chain corresponds to 302–407 (ERNNDCWSKA…GQGLETSTYP (106 aa)). Residues 408–428 (GEVIFSITLAIAGLLLFALLI) form a helical membrane-spanning segment. The Cytoplasmic segment spans residues 429–747 (GNMQTYLQSL…PEPDFSAEDH (319 aa)). Residues 514–638 (LFEN…SRQV) and aspartate 585 each bind a nucleoside 3',5'-cyclic phosphate. Residues 630-645 (FRRLHSRQVQHTFRFY) form a calmodulin-binding region. The 30-residue stretch at 650–679 (RTWAACFMQAAWRRYIKRKKLEQLRKEEEE) folds into the IQ domain.

It belongs to the cyclic nucleotide-gated cation channel (TC 1.A.1.5) family. As to quaternary structure, homotetramer or heterotetramer.

It localises to the cell membrane. Probable cyclic nucleotide-gated ion channel. This is Probable cyclic nucleotide-gated ion channel 6 (CNGC6) from Arabidopsis thaliana (Mouse-ear cress).